Reading from the N-terminus, the 243-residue chain is UPF0246 protein Spy49_1742 (243 aa).

This sequence belongs to the UPF0246 family.

This is UPF0246 protein Spy49_1742 from Streptococcus pyogenes serotype M49 (strain NZ131).